We begin with the raw amino-acid sequence, 369 residues long: Dual specificity protein phosphatase 1-B (369 aa).

Residues 21–138 (RAHKCLILDC…FSSQCPEFCN (118 aa)) enclose the Rhodanese domain. T168 is subject to Phosphothreonine; by MAPK1. The region spanning 175-316 (GPVEILPFLY…LLQFESQVLA (142 aa)) is the Tyrosine-protein phosphatase domain. Catalysis depends on C260, which acts as the Phosphocysteine intermediate.

This sequence belongs to the protein-tyrosine phosphatase family. Non-receptor class dual specificity subfamily. In terms of processing, phosphorylated by MAPK1/ERK2 at Thr-168 and at one or more serine residues in a progesterone-dependent manner. Phosphorylation reduces its rate of degradation but does not seem to affect phosphatase activity.

Its subcellular location is the nucleus. It catalyses the reaction O-phospho-L-seryl-[protein] + H2O = L-seryl-[protein] + phosphate. It carries out the reaction O-phospho-L-threonyl-[protein] + H2O = L-threonyl-[protein] + phosphate. The enzyme catalyses O-phospho-L-tyrosyl-[protein] + H2O = L-tyrosyl-[protein] + phosphate. Functionally, dual specificity phosphatase that dephosphorylates MAP kinase MAPK1/ERK2 on both 'Thr-188' and 'Tyr-190', regulating its activity during the meiotic cell cycle. The chain is Dual specificity protein phosphatase 1-B from Xenopus laevis (African clawed frog).